We begin with the raw amino-acid sequence, 91 residues long: Small ribosomal subunit protein uS19c (91 aa).

It belongs to the universal ribosomal protein uS19 family.

Its subcellular location is the plastid. The protein localises to the organellar chromatophore. Protein S19 forms a complex with S13 that binds strongly to the 16S ribosomal RNA. This is Small ribosomal subunit protein uS19c from Paulinella chromatophora.